Reading from the N-terminus, the 337-residue chain is Visual pigment-like receptor peropsin (337 aa).

The Extracellular segment spans residues 1 to 26 (MLSEASDFNSSGSRSEGSVFSRTEHS). N-linked (GlcNAc...) asparagine glycosylation occurs at Asn-9. A helical membrane pass occupies residues 27-49 (VIAAYLIVAGITSILSNVVVLGI). The Cytoplasmic portion of the chain corresponds to 50 to 61 (FIKYKELRTPTN). A helical membrane pass occupies residues 62–87 (AVIINLAFTDIGVSSIGYPMSAASDL). Over 88–101 (HGSWKFGHAGCQIY) the chain is Extracellular. The cysteines at positions 98 and 175 are disulfide-linked. The helical transmembrane segment at 102–121 (AGLNIFFGMVSIGLLTVVAM) threads the bilayer. Over 122–140 (DRYLTISCPDVGRRMTTNT) the chain is Cytoplasmic. The helical transmembrane segment at 141 to 164 (YLSMILGAWINGLFWALMPIIGWA) threads the bilayer. Residues 165-188 (SYAPDPTGATCTINWRNNDTSFVS) lie on the Extracellular side of the membrane. Asn-182 is a glycosylation site (N-linked (GlcNAc...) asparagine). A helical transmembrane segment spans residues 189–212 (YTMMVIVVNFIVPLTVMFYCYYHV). Residues 213-240 (SRSLRLYAASDCTAHLHRDWADQADVTK) lie on the Cytoplasmic side of the membrane. Residues 241 to 264 (MSVIMILMFLLAWSPYSIVCLWAC) traverse the membrane as a helical segment. Topologically, residues 265-272 (FGNPKKIP) are extracellular. The chain crosses the membrane as a helical span at residues 273–297 (PSMAIIAPLFAKSSTFYNPCIYVAA). Lys-284 carries the post-translational modification N6-(retinylidene)lysine. At 298–337 (HKKFRKAMLAMFKCQPHLAVPEPSTLPMDMPQSSLAPVRI) the chain is on the cytoplasmic side.

Belongs to the G-protein coupled receptor 1 family. Opsin subfamily. In terms of tissue distribution, found only in the eye, where it is localized to the retinal pigment epithelium (RPE). In the RPE, it is localized to the microvilli that surround the photoreceptor outer segments.

It localises to the membrane. Functionally, may play a role in rpe physiology either by detecting light directly or by monitoring the concentration of retinoids or other photoreceptor-derived compounds. This chain is Visual pigment-like receptor peropsin (Rrh), found in Mus musculus (Mouse).